A 547-amino-acid polypeptide reads, in one-letter code: Solute carrier family 22 member 7 (547 aa).

Transmembrane regions (helical) follow at residues 21-41 (VALLALPRVLLPMHFLLPIFL), 145-165 (ATSTFFFAGVLVGAVAFGYLS), 173-193 (LLLVAYVSALVLGLVSAASVS), 203-223 (LTGTALAGFTIIVMPLELEWL), 233-253 (VLSSTFWTGGVMLLALVGYLI), 258-278 (WLLLAVTLPCAPGILSLWWVP), 345-365 (ISLCCMVVWFGVNFSYYGLSL), 374-396 (VYQTQLLFGAVELPSKLLVYLSV), 403-423 (LTLAGTLLGTSLSLGFRLLVS), 431-451 (TALAVLGKGFSEAAFTTAYLF), 465-485 (MGLTALVGRLGGSLAPLAALL), and 492-512 (LPKLAYGGIALLAACTALLLP). Positions 521–547 (ETIQDVERKSAPSSLQEEEMPMKQVQD) are disordered.

It belongs to the major facilitator (TC 2.A.1) superfamily. Organic cation transporter (TC 2.A.1.19) family.

Its subcellular location is the basolateral cell membrane. The protein resides in the apical cell membrane. It is found in the cell membrane. The enzyme catalyses orotate(out) + L-glutamate(in) = orotate(in) + L-glutamate(out). It catalyses the reaction 3',5'-cyclic GMP(in) = 3',5'-cyclic GMP(out). It carries out the reaction GMP(in) = GMP(out). The catalysed reaction is 2'-deoxyguanosine(in) = 2'-deoxyguanosine(out). The enzyme catalyses GDP(in) = GDP(out). It catalyses the reaction guanosine(in) = guanosine(out). It carries out the reaction GTP(in) = GTP(out). The catalysed reaction is 3',5'-cyclic AMP(in) = 3',5'-cyclic AMP(out). The enzyme catalyses creatinine(in) = creatinine(out). It catalyses the reaction prostaglandin E2(out) = prostaglandin E2(in). It carries out the reaction 2-oxoglutarate(in) = 2-oxoglutarate(out). The catalysed reaction is glutarate(in) = glutarate(out). The enzyme catalyses urate(out) = urate(in). It catalyses the reaction estrone 3-sulfate(out) = estrone 3-sulfate(in). Functionally, functions as a Na(+)-independent bidirectional multispecific transporter. Contributes to the renal and hepatic elimination of endogenous organic compounds from the systemic circulation into the urine and bile, respectively. Capable of transporting a wide range of purine and pyrimidine nucleobases, nucleosides and nucleotides, with cGMP, 2'deoxyguanosine and GMP being the preferred substrates. Functions as a pH- and chloride-independent cGMP bidirectional facilitative transporter that can regulate both intracellular and extracellular levels of cGMP and may be involved in cGMP signaling pathways. Mediates orotate/glutamate bidirectional exchange and most likely display a physiological role in hepatic release of glutamate into the blood. Involved in renal secretion and possible reabsorption of creatinine. Able to uptake prostaglandin E2 (PGE2) and may contribute to PGE2 renal excretion. Also transports alpha-ketoglutarate and urate. Apart from the orotate/glutamate exchange, the counterions for the uptake of other SLC22A7/OAT2 substrates remain to be identified. In Sus scrofa (Pig), this protein is Solute carrier family 22 member 7 (SLC22A7).